Here is a 417-residue protein sequence, read N- to C-terminus: Probable uracil permease (417 aa).

Residues Met-1–Asn-13 lie on the Cytoplasmic side of the membrane. Residues His-14–Leu-37 form a helical membrane-spanning segment. Residues Ile-38–Leu-41 lie on the Periplasmic side of the membrane. A helical membrane pass occupies residues Asn-42–Thr-61. The Cytoplasmic portion of the chain corresponds to Gly-62–Gln-64. Residues Val-65 to Tyr-81 form a discontinuously helical membrane-spanning segment. Phe-73 contacts uracil. The Periplasmic portion of the chain corresponds to Val-83–Thr-90. Residues Thr-91 to Ile-111 traverse the membrane as a helical segment. The Cytoplasmic portion of the chain corresponds to Lys-112–Pro-123. The helical transmembrane segment at Val-124 to Ala-145 threads the bilayer. Residues Leu-146–Tyr-154 lie on the Periplasmic side of the membrane. The chain crosses the membrane as a helical span at residues Asn-155–Gly-170. Residues Val-171–Gly-177 lie on the Cytoplasmic side of the membrane. A helical transmembrane segment spans residues Met-178 to Leu-198. Topologically, residues Gly-199–Lys-223 are periplasmic. The chain crosses the membrane as a helical span at residues Leu-224–Ala-247. Position 240 (Glu-240) interacts with uracil. The Cytoplasmic portion of the chain corresponds to Ile-248–Pro-260. A helical membrane pass occupies residues Gly-261–Gly-280. Residues Gly-281 to Thr-297 form a discontinuously helical membrane-spanning segment. Residue Glu-289 participates in uracil binding. Residues Arg-298–Phe-300 are Cytoplasmic-facing. Residues Asn-301–Cys-318 form a helical membrane-spanning segment. At Gly-319 to Ile-331 the chain is on the periplasmic side. A helical membrane pass occupies residues Val-332–Ile-353. Over Arg-354 to Asn-364 the chain is Cytoplasmic. The discontinuously helical intramembrane region spans Leu-365 to Leu-400. The Cytoplasmic portion of the chain corresponds to Leu-401 to Asn-416.

This sequence belongs to the nucleobase:cation symporter-2 (NCS2) (TC 2.A.40) family.

Its subcellular location is the cell inner membrane. The catalysed reaction is uracil(in) + H(+)(in) = uracil(out) + H(+)(out). Functionally, transport of uracil in the cell. The protein is Probable uracil permease (uraA) of Pasteurella multocida (strain Pm70).